The sequence spans 908 residues: Magnesium-transporting ATPase, P-type 1 (908 aa).

Basic and acidic residues predominate over residues 1–20; sequence MTDMNIENRKLNRPASENDK. Positions 1-21 are disordered; it reads MTDMNIENRKLNRPASENDKQ. The Cytoplasmic portion of the chain corresponds to 1–80; the sequence is MTDMNIENRK…QVPPALIQLL (80 aa). The helical transmembrane segment at 81–101 threads the bilayer; the sequence is QAFNNPFIYVLMALAGVSFIT. At 102-113 the chain is on the extracellular side; sequence DYWLPLRRGEET. Residues 114–134 form a helical membrane-spanning segment; sequence DLTGVLIILTMVSLSGLLRFW. Topologically, residues 135–293 are cytoplasmic; that stretch reads QEFRTNRAAQ…QTAFDRGVNS (159 aa). The chain crosses the membrane as a helical span at residues 294-314; sequence VSWLLIRFMLIMVPVVLLING. The Extracellular portion of the chain corresponds to 315-323; sequence FSKGDWVEA. A helical transmembrane segment spans residues 324–341; the sequence is SLFALAVAVGLTPEMLPM. Glu-337 is a Mg(2+) binding site. At 342–704 the chain is on the cytoplasmic side; it reads IVSSNLAKGA…IKGRETFGNI (363 aa). The active-site 4-aspartylphosphate intermediate is the Asp-379. Positions 650, 654, and 718 each coordinate Mg(2+). The helical transmembrane segment at 705 to 724 threads the bilayer; sequence IKYLNMTASSNFGNVFSVLV. The Extracellular portion of the chain corresponds to 725 to 733; that stretch reads ASAFIPFLP. A helical transmembrane segment spans residues 734-753; that stretch reads MLAIHLLIQNLMYDISQLSL. Mg(2+) is bound by residues Asn-743 and Asp-747. Residues 754-775 are Cytoplasmic-facing; the sequence is PWDKMDKEFLRKPRKWDAKNIG. Residues 776 to 799 traverse the membrane as a helical segment; it reads RFMLWIGPTSSIFDITTFALMWYV. The Extracellular portion of the chain corresponds to 800–808; the sequence is FAANNVEAQ. Residues 809-827 traverse the membrane as a helical segment; that stretch reads ALFQSGWFIEGLLSQTLVV. Over 828-840 the chain is Cytoplasmic; the sequence is HMLRTQKIPFIQS. A helical membrane pass occupies residues 841–860; sequence RATLPVLLTTGLIMAIGIYI. The Extracellular portion of the chain corresponds to 861–875; the sequence is PFSPLGAMVGLEPLP. A helical membrane pass occupies residues 876 to 895; that stretch reads LSYFPWLVATLLSYCLVAQG. The Cytoplasmic portion of the chain corresponds to 896-908; sequence MKRFYIKRFGQWF.

The protein belongs to the cation transport ATPase (P-type) (TC 3.A.3) family. Type IIIB subfamily.

The protein resides in the cell inner membrane. It catalyses the reaction Mg(2+)(out) + ATP + H2O = Mg(2+)(in) + ADP + phosphate + H(+). In terms of biological role, mediates magnesium influx to the cytosol. The protein is Magnesium-transporting ATPase, P-type 1 (mgtB) of Salmonella typhimurium (strain LT2 / SGSC1412 / ATCC 700720).